Here is a 464-residue protein sequence, read N- to C-terminus: Bifunctional protein GlmU (464 aa).

The segment at 1-232 is pyrophosphorylase; that stretch reads MKHDELAAVI…ADEAMGINDR (232 aa). Residues 11–14, lysine 25, glutamine 76, and 81–82 each bind UDP-N-acetyl-alpha-D-glucosamine; these read LAAG and GT. Aspartate 106 serves as a coordination point for Mg(2+). Glycine 143, glutamate 157, asparagine 172, and asparagine 230 together coordinate UDP-N-acetyl-alpha-D-glucosamine. Asparagine 230 provides a ligand contact to Mg(2+). The segment at 233 to 253 is linker; that stretch reads VQLAQASALMRRRINENLMRA. Positions 254-464 are N-acetyltransferase; that stretch reads GVSFIDPEQT…RHDPKCKNKD (211 aa). UDP-N-acetyl-alpha-D-glucosamine is bound by residues arginine 336 and lysine 354. Histidine 366 (proton acceptor) is an active-site residue. Residues tyrosine 369 and asparagine 380 each contribute to the UDP-N-acetyl-alpha-D-glucosamine site. Residues 389–390, serine 408, alanine 426, and arginine 443 contribute to the acetyl-CoA site; that span reads NY.

The protein in the N-terminal section; belongs to the N-acetylglucosamine-1-phosphate uridyltransferase family. This sequence in the C-terminal section; belongs to the transferase hexapeptide repeat family. As to quaternary structure, homotrimer. Mg(2+) is required as a cofactor.

Its subcellular location is the cytoplasm. The enzyme catalyses alpha-D-glucosamine 1-phosphate + acetyl-CoA = N-acetyl-alpha-D-glucosamine 1-phosphate + CoA + H(+). It carries out the reaction N-acetyl-alpha-D-glucosamine 1-phosphate + UTP + H(+) = UDP-N-acetyl-alpha-D-glucosamine + diphosphate. The protein operates within nucleotide-sugar biosynthesis; UDP-N-acetyl-alpha-D-glucosamine biosynthesis; N-acetyl-alpha-D-glucosamine 1-phosphate from alpha-D-glucosamine 6-phosphate (route II): step 2/2. It functions in the pathway nucleotide-sugar biosynthesis; UDP-N-acetyl-alpha-D-glucosamine biosynthesis; UDP-N-acetyl-alpha-D-glucosamine from N-acetyl-alpha-D-glucosamine 1-phosphate: step 1/1. Its pathway is bacterial outer membrane biogenesis; LPS lipid A biosynthesis. Functionally, catalyzes the last two sequential reactions in the de novo biosynthetic pathway for UDP-N-acetylglucosamine (UDP-GlcNAc). The C-terminal domain catalyzes the transfer of acetyl group from acetyl coenzyme A to glucosamine-1-phosphate (GlcN-1-P) to produce N-acetylglucosamine-1-phosphate (GlcNAc-1-P), which is converted into UDP-GlcNAc by the transfer of uridine 5-monophosphate (from uridine 5-triphosphate), a reaction catalyzed by the N-terminal domain. The sequence is that of Bifunctional protein GlmU from Syntrophotalea carbinolica (strain DSM 2380 / NBRC 103641 / GraBd1) (Pelobacter carbinolicus).